A 253-amino-acid polypeptide reads, in one-letter code: Ubiquinone biosynthesis O-methyltransferase (253 aa).

The S-adenosyl-L-methionine site is built by arginine 47, glycine 78, aspartate 99, and methionine 141.

This sequence belongs to the methyltransferase superfamily. UbiG/COQ3 family.

It catalyses the reaction a 3-demethylubiquinol + S-adenosyl-L-methionine = a ubiquinol + S-adenosyl-L-homocysteine + H(+). The catalysed reaction is a 3-(all-trans-polyprenyl)benzene-1,2-diol + S-adenosyl-L-methionine = a 2-methoxy-6-(all-trans-polyprenyl)phenol + S-adenosyl-L-homocysteine + H(+). It functions in the pathway cofactor biosynthesis; ubiquinone biosynthesis. In terms of biological role, O-methyltransferase that catalyzes the 2 O-methylation steps in the ubiquinone biosynthetic pathway. This Rhodopseudomonas palustris (strain ATCC BAA-98 / CGA009) protein is Ubiquinone biosynthesis O-methyltransferase.